A 137-amino-acid chain; its full sequence is Structural protein A137R (137 aa).

The protein belongs to the asfivirus A137R family. In terms of assembly, interacts with host TBK1.

The protein resides in the virion. Its subcellular location is the host cytoplasm. Functionally, plays a role in the inhibition of the host innate immune response. Mechanistically, promotes the autophagy-mediated lysosomal degradation of host TBK1 and affects IRF3 nuclear translocation to block type I IFN production. The protein is Structural protein A137R of African swine fever virus (isolate Warthog/Namibia/Wart80/1980) (ASFV).